We begin with the raw amino-acid sequence, 436 residues long: Serine carboxypeptidase-like 15 (436 aa).

The first 24 residues, Met1–Ser24, serve as a signal peptide directing secretion. Cystine bridges form between Cys83-Cys326, Cys247-Cys261, and Cys285-Cys292. N-linked (GlcNAc...) asparagine glycosylation occurs at Asn104. Ser179 is a catalytic residue. N-linked (GlcNAc...) asparagine glycans are attached at residues Asn306 and Asn345. The active site involves Asp361. Asn377 carries an N-linked (GlcNAc...) asparagine glycan. Residue His414 is part of the active site.

The protein belongs to the peptidase S10 family. As to expression, expressed in seedlings and roots.

Its subcellular location is the secreted. In terms of biological role, probable carboxypeptidase. The chain is Serine carboxypeptidase-like 15 (SCPL15) from Arabidopsis thaliana (Mouse-ear cress).